Reading from the N-terminus, the 221-residue chain is Putative NAD(P)H nitroreductase YfkO (221 aa).

Residues arginine 15–alanine 17 and glutamine 73–glutamine 75 each bind FMN. NAD(+) is bound at residue alanine 157–glycine 162. Residues glutamate 169–glycine 170 and arginine 211 contribute to the FMN site.

This sequence belongs to the nitroreductase family. As to quaternary structure, monomer. FMN serves as cofactor.

This is Putative NAD(P)H nitroreductase YfkO (yfkO) from Bacillus subtilis (strain 168).